The chain runs to 213 residues: Cytokinin riboside 5'-monophosphate phosphoribohydrolase LOG1 (213 aa).

Substrate is bound by residues glutamate 78, arginine 96 to lysine 97, glycine 113 to glutamate 119, and threonine 125.

This sequence belongs to the LOG family. As to expression, expressed in roots and shoots. Detected in the vascular tissues of roots, cotyledons, leaves and pistils, in the shoot apical meristem and in immature flowers.

It is found in the cytoplasm. The protein resides in the nucleus. The enzyme catalyses N(6)-(dimethylallyl)adenosine 5'-phosphate + H2O = N(6)-dimethylallyladenine + D-ribose 5-phosphate. It carries out the reaction 9-ribosyl-trans-zeatin 5'-phosphate + H2O = trans-zeatin + D-ribose 5-phosphate. In terms of biological role, cytokinin-activating enzyme working in the direct activation pathway. Phosphoribohydrolase that converts inactive cytokinin nucleotides to the biologically active free-base forms. The protein is Cytokinin riboside 5'-monophosphate phosphoribohydrolase LOG1 (LOG1) of Arabidopsis thaliana (Mouse-ear cress).